The sequence spans 545 residues: Glucose-6-phosphate isomerase (545 aa).

Glu-351 functions as the Proton donor in the catalytic mechanism. Residues His-382 and Lys-510 contribute to the active site.

This sequence belongs to the GPI family.

The protein localises to the cytoplasm. The catalysed reaction is alpha-D-glucose 6-phosphate = beta-D-fructose 6-phosphate. The protein operates within carbohydrate biosynthesis; gluconeogenesis. Its pathway is carbohydrate degradation; glycolysis; D-glyceraldehyde 3-phosphate and glycerone phosphate from D-glucose: step 2/4. Catalyzes the reversible isomerization of glucose-6-phosphate to fructose-6-phosphate. This Shewanella baltica (strain OS155 / ATCC BAA-1091) protein is Glucose-6-phosphate isomerase.